A 299-amino-acid chain; its full sequence is Protease HtpX homolog (299 aa).

2 consecutive transmembrane segments (helical) span residues 19 to 39 and 41 to 61; these read LFIV…VWYF and WGIT…WIAY. Position 146 (histidine 146) interacts with Zn(2+). Glutamate 147 is an active-site residue. Position 150 (histidine 150) interacts with Zn(2+). 2 helical membrane passes run 156 to 176 and 198 to 218; these read ILLM…RDVF and IILL…VLII. Position 227 (glutamate 227) interacts with Zn(2+).

It belongs to the peptidase M48B family. Zn(2+) serves as cofactor.

It localises to the cell membrane. In Caldanaerobacter subterraneus subsp. tengcongensis (strain DSM 15242 / JCM 11007 / NBRC 100824 / MB4) (Thermoanaerobacter tengcongensis), this protein is Protease HtpX homolog.